Reading from the N-terminus, the 457-residue chain is Siroheme synthase (457 aa).

The tract at residues Met1–Thr204 is precorrin-2 dehydrogenase /sirohydrochlorin ferrochelatase. NAD(+)-binding positions include Asp22–Val23 and Leu43–Asn44. Ser128 bears the Phosphoserine mark. Residues Gly216–His457 are uroporphyrinogen-III C-methyltransferase. Pro225 contacts S-adenosyl-L-methionine. Catalysis depends on Asp248, which acts as the Proton acceptor. Lys270 serves as the catalytic Proton donor. S-adenosyl-L-methionine contacts are provided by residues Gly301–Asp303, Ile306, Thr331–Ala332, Met382, and Gly411.

It in the N-terminal section; belongs to the precorrin-2 dehydrogenase / sirohydrochlorin ferrochelatase family. The protein in the C-terminal section; belongs to the precorrin methyltransferase family.

The enzyme catalyses uroporphyrinogen III + 2 S-adenosyl-L-methionine = precorrin-2 + 2 S-adenosyl-L-homocysteine + H(+). The catalysed reaction is precorrin-2 + NAD(+) = sirohydrochlorin + NADH + 2 H(+). It catalyses the reaction siroheme + 2 H(+) = sirohydrochlorin + Fe(2+). It participates in cofactor biosynthesis; adenosylcobalamin biosynthesis; precorrin-2 from uroporphyrinogen III: step 1/1. The protein operates within cofactor biosynthesis; adenosylcobalamin biosynthesis; sirohydrochlorin from precorrin-2: step 1/1. It functions in the pathway porphyrin-containing compound metabolism; siroheme biosynthesis; precorrin-2 from uroporphyrinogen III: step 1/1. Its pathway is porphyrin-containing compound metabolism; siroheme biosynthesis; siroheme from sirohydrochlorin: step 1/1. It participates in porphyrin-containing compound metabolism; siroheme biosynthesis; sirohydrochlorin from precorrin-2: step 1/1. Functionally, multifunctional enzyme that catalyzes the SAM-dependent methylations of uroporphyrinogen III at position C-2 and C-7 to form precorrin-2 via precorrin-1. Then it catalyzes the NAD-dependent ring dehydrogenation of precorrin-2 to yield sirohydrochlorin. Finally, it catalyzes the ferrochelation of sirohydrochlorin to yield siroheme. This is Siroheme synthase from Salmonella paratyphi A (strain ATCC 9150 / SARB42).